Reading from the N-terminus, the 141-residue chain is Large ribosomal subunit protein bL17 (141 aa).

The protein belongs to the bacterial ribosomal protein bL17 family. As to quaternary structure, part of the 50S ribosomal subunit. Contacts protein L32.

The polypeptide is Large ribosomal subunit protein bL17 (Bartonella bacilliformis (strain ATCC 35685 / KC583 / Herrer 020/F12,63)).